Here is a 677-residue protein sequence, read N- to C-terminus: Galactocerebrosidase (677 aa).

Positions 1–33 are cleaved as a signal peptide; that stretch reads MGTVPAGSRRAPGCGEGMFILCLALLLAPGAPA. Substrate-binding residues include threonine 101, tryptophan 143, and asparagine 189. Glutamate 190 (proton donor/acceptor) is an active-site residue. The active-site Nucleophile is the glutamate 265. A disulfide bridge links cysteine 278 with cysteine 385. N-linked (GlcNAc...) asparagine glycans are attached at residues asparagine 291, asparagine 370, and asparagine 381. Substrate is bound at residue arginine 387. Asparagine 394, asparagine 399, asparagine 424, asparagine 441, asparagine 509, asparagine 549, and asparagine 630 each carry an N-linked (GlcNAc...) asparagine glycan.

Belongs to the glycosyl hydrolase 59 family.

It is found in the lysosome. The enzyme catalyses a beta-D-galactosyl-(1&lt;-&gt;1')-N-acylsphing-4-enine + H2O = an N-acylsphing-4-enine + D-galactose. It carries out the reaction beta-D-galactosyl-(1&lt;-&gt;1)-sphing-4-enine + H2O = sphing-4-enine + D-galactose. The catalysed reaction is a D-galactosylceramide + H2O = an N-acyl-sphingoid base + D-galactose. In terms of biological role, hydrolyzes the galactose ester bonds of glycolipids such as galactosylceramide and galactosylsphingosine. The polypeptide is Galactocerebrosidase (Xenopus laevis (African clawed frog)).